Here is a 32-residue protein sequence, read N- to C-terminus: Cyclotide glopa A (32 aa).

The segment at residues 1-32 (GGSIPCIETCVWTGCFLVPGCSCKSDKKCYLN) is a cross-link (cyclopeptide (Gly-Asn)). Intrachain disulfides connect cysteine 6–cysteine 21, cysteine 10–cysteine 23, and cysteine 15–cysteine 29.

In terms of processing, this is a cyclic peptide.

Probably participates in a plant defense mechanism. This chain is Cyclotide glopa A, found in Gloeospermum pauciflorum.